The primary structure comprises 306 residues: Acetylglutamate kinase (306 aa).

Substrate-binding positions include 79-80 (GG), arginine 101, and asparagine 203.

It belongs to the acetylglutamate kinase family. ArgB subfamily.

Its subcellular location is the cytoplasm. The catalysed reaction is N-acetyl-L-glutamate + ATP = N-acetyl-L-glutamyl 5-phosphate + ADP. It functions in the pathway amino-acid biosynthesis; L-arginine biosynthesis; N(2)-acetyl-L-ornithine from L-glutamate: step 2/4. In terms of biological role, catalyzes the ATP-dependent phosphorylation of N-acetyl-L-glutamate. This is Acetylglutamate kinase from Polaromonas naphthalenivorans (strain CJ2).